We begin with the raw amino-acid sequence, 1116 residues long: Protein translocase subunit SecA (1116 aa).

ATP contacts are provided by residues Q176, 194–198 (GEGKT), and D693.

It belongs to the SecA family. In terms of assembly, monomer and homodimer. Part of the essential Sec protein translocation apparatus which comprises SecA, SecYEG and auxiliary proteins SecDF. Other proteins may also be involved.

The protein localises to the cell inner membrane. The protein resides in the cytoplasm. It carries out the reaction ATP + H2O + cellular proteinSide 1 = ADP + phosphate + cellular proteinSide 2.. Functionally, part of the Sec protein translocase complex. Interacts with the SecYEG preprotein conducting channel. Has a central role in coupling the hydrolysis of ATP to the transfer of proteins into and across the cell membrane, serving as an ATP-driven molecular motor driving the stepwise translocation of polypeptide chains across the membrane. The sequence is that of Protein translocase subunit SecA from Amoebophilus asiaticus (strain 5a2).